The primary structure comprises 349 residues: tRNA N6-adenosine threonylcarbamoyltransferase (349 aa).

Fe cation-binding residues include H117 and H121. Residues 140 to 144, D173, G186, and N284 each bind substrate; that span reads LVSGG. D312 lines the Fe cation pocket.

The protein belongs to the KAE1 / TsaD family. Fe(2+) is required as a cofactor.

The protein localises to the cytoplasm. The enzyme catalyses L-threonylcarbamoyladenylate + adenosine(37) in tRNA = N(6)-L-threonylcarbamoyladenosine(37) in tRNA + AMP + H(+). In terms of biological role, required for the formation of a threonylcarbamoyl group on adenosine at position 37 (t(6)A37) in tRNAs that read codons beginning with adenine. Is involved in the transfer of the threonylcarbamoyl moiety of threonylcarbamoyl-AMP (TC-AMP) to the N6 group of A37, together with TsaE and TsaB. TsaD likely plays a direct catalytic role in this reaction. This chain is tRNA N6-adenosine threonylcarbamoyltransferase, found in Psychrobacter arcticus (strain DSM 17307 / VKM B-2377 / 273-4).